Reading from the N-terminus, the 150-residue chain is Large ribosomal subunit protein bL9 (150 aa).

Belongs to the bacterial ribosomal protein bL9 family.

Functionally, binds to the 23S rRNA. In Renibacterium salmoninarum (strain ATCC 33209 / DSM 20767 / JCM 11484 / NBRC 15589 / NCIMB 2235), this protein is Large ribosomal subunit protein bL9.